A 258-amino-acid chain; its full sequence is Imidazole glycerol phosphate synthase subunit HisF (258 aa).

Active-site residues include D12 and D131.

Belongs to the HisA/HisF family. In terms of assembly, heterodimer of HisH and HisF.

It localises to the cytoplasm. The enzyme catalyses 5-[(5-phospho-1-deoxy-D-ribulos-1-ylimino)methylamino]-1-(5-phospho-beta-D-ribosyl)imidazole-4-carboxamide + L-glutamine = D-erythro-1-(imidazol-4-yl)glycerol 3-phosphate + 5-amino-1-(5-phospho-beta-D-ribosyl)imidazole-4-carboxamide + L-glutamate + H(+). The protein operates within amino-acid biosynthesis; L-histidine biosynthesis; L-histidine from 5-phospho-alpha-D-ribose 1-diphosphate: step 5/9. Functionally, IGPS catalyzes the conversion of PRFAR and glutamine to IGP, AICAR and glutamate. The HisF subunit catalyzes the cyclization activity that produces IGP and AICAR from PRFAR using the ammonia provided by the HisH subunit. This is Imidazole glycerol phosphate synthase subunit HisF from Paenarthrobacter aurescens (strain TC1).